Reading from the N-terminus, the 140-residue chain is Large ribosomal subunit protein bL17 (140 aa).

A disordered region spans residues 121–140 (AAKGLDSGPTAEANDDDSEE).

The protein belongs to the bacterial ribosomal protein bL17 family. Part of the 50S ribosomal subunit. Contacts protein L32.

This chain is Large ribosomal subunit protein bL17, found in Rhodospirillum rubrum (strain ATCC 11170 / ATH 1.1.1 / DSM 467 / LMG 4362 / NCIMB 8255 / S1).